Reading from the N-terminus, the 413-residue chain is High zinc activated nuclear receptor protein (413 aa).

Positions 11–86 (LGNCKICLQR…EGMKIELVQL (76 aa)) form a DNA-binding region, nuclear receptor. 2 consecutive NR C4-type zinc fingers follow at residues 14–34 (CKIC…CRAC) and 50–69 (CKEK…CRSC). Residues 101–412 (SIDPLFTPNV…TSQCIVHTKN (312 aa)) form a required for zinc-binding region. The 262-residue stretch at 135-396 (QMTSGYAMFL…VCCKNFKEDA (262 aa)) folds into the NR LBD domain.

Belongs to the nuclear hormone receptor family. As to expression, weakly expressed in intestinal cells in the absence of zinc supplementation. Upon zinc supplementation, accumulates in alimentary tract cells, and it is mainly expressed in the intestine.

It localises to the nucleus. It is found in the cytoplasm. Nuclear receptor transcription factor that binds to DNA enhancer elements to promote the transcription of genes required to maintain micronutrient homeostasis. Direct binding to its ligand zinc allows for nuclear accumulation and activation, which thereby induces the transcription of genes required to promote the storage and detoxification of excess dietary zinc. This in turn, allows for internal zinc levels to be detected and regulated. The polypeptide is High zinc activated nuclear receptor protein (Caenorhabditis elegans).